The following is a 142-amino-acid chain: Phosphoribosyl-AMP cyclohydrolase (142 aa).

Asp-92 is a Mg(2+) binding site. Cys-93 contributes to the Zn(2+) binding site. Positions 94 and 96 each coordinate Mg(2+). Residues Cys-109 and Cys-116 each contribute to the Zn(2+) site.

The protein belongs to the PRA-CH family. Homodimer. Mg(2+) is required as a cofactor. The cofactor is Zn(2+).

Its subcellular location is the cytoplasm. The enzyme catalyses 1-(5-phospho-beta-D-ribosyl)-5'-AMP + H2O = 1-(5-phospho-beta-D-ribosyl)-5-[(5-phospho-beta-D-ribosylamino)methylideneamino]imidazole-4-carboxamide. Its pathway is amino-acid biosynthesis; L-histidine biosynthesis; L-histidine from 5-phospho-alpha-D-ribose 1-diphosphate: step 3/9. In terms of biological role, catalyzes the hydrolysis of the adenine ring of phosphoribosyl-AMP. The protein is Phosphoribosyl-AMP cyclohydrolase of Alkalilimnicola ehrlichii (strain ATCC BAA-1101 / DSM 17681 / MLHE-1).